Reading from the N-terminus, the 126-residue chain is uncharacterized protein (126 aa).

This is an uncharacterized protein from Agrobacterium tumefaciens (strain 15955).